The primary structure comprises 136 residues: Large ribosomal subunit protein uL16 (136 aa).

The protein belongs to the universal ribosomal protein uL16 family. Part of the 50S ribosomal subunit.

Its function is as follows. Binds 23S rRNA and is also seen to make contacts with the A and possibly P site tRNAs. The protein is Large ribosomal subunit protein uL16 of Orientia tsutsugamushi (strain Ikeda) (Rickettsia tsutsugamushi).